Reading from the N-terminus, the 564-residue chain is Proline--tRNA ligase (564 aa).

This sequence belongs to the class-II aminoacyl-tRNA synthetase family. ProS type 1 subfamily. As to quaternary structure, homodimer.

It is found in the cytoplasm. It carries out the reaction tRNA(Pro) + L-proline + ATP = L-prolyl-tRNA(Pro) + AMP + diphosphate. Its function is as follows. Catalyzes the attachment of proline to tRNA(Pro) in a two-step reaction: proline is first activated by ATP to form Pro-AMP and then transferred to the acceptor end of tRNA(Pro). As ProRS can inadvertently accommodate and process non-cognate amino acids such as alanine and cysteine, to avoid such errors it has two additional distinct editing activities against alanine. One activity is designated as 'pretransfer' editing and involves the tRNA(Pro)-independent hydrolysis of activated Ala-AMP. The other activity is designated 'posttransfer' editing and involves deacylation of mischarged Ala-tRNA(Pro). The misacylated Cys-tRNA(Pro) is not edited by ProRS. The chain is Proline--tRNA ligase from Xylella fastidiosa (strain Temecula1 / ATCC 700964).